Reading from the N-terminus, the 183-residue chain is Ferritin heavy polypeptide-like 17 (183 aa).

A Ferritin-like diiron domain is found at 11–160 (QKYDTNCDAA…GYVSNLRKIC (150 aa)). The Fe cation site is built by Glu28, His66, Glu108, and Gln142.

It belongs to the ferritin family. As to expression, testis specific. Also expressed in several cancers.

The chain is Ferritin heavy polypeptide-like 17 (FTHL17) from Homo sapiens (Human).